Consider the following 687-residue polypeptide: DNA-directed RNA polymerase subunit beta' (687 aa).

The Zn(2+) site is built by cysteine 69, cysteine 71, cysteine 87, and cysteine 90. Mg(2+)-binding residues include aspartate 493, aspartate 495, and aspartate 497.

Belongs to the RNA polymerase beta' chain family. RpoC1 subfamily. As to quaternary structure, in plastids the minimal PEP RNA polymerase catalytic core is composed of four subunits: alpha, beta, beta', and beta''. When a (nuclear-encoded) sigma factor is associated with the core the holoenzyme is formed, which can initiate transcription. It depends on Mg(2+) as a cofactor. Zn(2+) serves as cofactor.

Its subcellular location is the plastid. The protein resides in the chloroplast. It carries out the reaction RNA(n) + a ribonucleoside 5'-triphosphate = RNA(n+1) + diphosphate. Its function is as follows. DNA-dependent RNA polymerase catalyzes the transcription of DNA into RNA using the four ribonucleoside triphosphates as substrates. This Angiopteris evecta (Mule's foot fern) protein is DNA-directed RNA polymerase subunit beta'.